A 172-amino-acid chain; its full sequence is Translationally-controlled tumor protein (172 aa).

In terms of domain architecture, TCTP spans 1-172 (MIIYRDLISH…FKDGLEMEKC (172 aa)). At S46 the chain carries Phosphoserine; by PLK1. Phosphoserine is present on S53. At S64 the chain carries Phosphoserine; by PLK1. A required for reduction of TSC22D1 protein stability region spans residues 70–172 (VDIVMNHHLQ…FKDGLEMEKC (103 aa)).

The protein belongs to the TCTP family. As to quaternary structure, homodimer. Interacts with STEAP3. Interacts with TSC22D1; interaction results in the destabilization of TSC22D1 protein.

It localises to the cytoplasm. Its function is as follows. Involved in calcium binding and microtubule stabilization. Acts as a negative regulator of TSC22D1-mediated apoptosis, via interaction with and destabilization of TSC22D1 protein. The protein is Translationally-controlled tumor protein (TPT1) of Oryctolagus cuniculus (Rabbit).